A 344-amino-acid polypeptide reads, in one-letter code: tRNA(Ile)-lysidine synthase (344 aa).

43–48 is a binding site for ATP; it reads SGGADS.

It belongs to the tRNA(Ile)-lysidine synthase family.

Its subcellular location is the cytoplasm. The catalysed reaction is cytidine(34) in tRNA(Ile2) + L-lysine + ATP = lysidine(34) in tRNA(Ile2) + AMP + diphosphate + H(+). Its function is as follows. Ligates lysine onto the cytidine present at position 34 of the AUA codon-specific tRNA(Ile) that contains the anticodon CAU, in an ATP-dependent manner. Cytidine is converted to lysidine, thus changing the amino acid specificity of the tRNA from methionine to isoleucine. The chain is tRNA(Ile)-lysidine synthase from Bordetella bronchiseptica (strain ATCC BAA-588 / NCTC 13252 / RB50) (Alcaligenes bronchisepticus).